The following is a 232-amino-acid chain: Protein fmp52-1, mitochondrial (232 aa).

The N-terminal 36 residues, 1–36 (MASVALIGCTGMVGSHILTSLLAHPSVARVDTISRR), are a transit peptide targeting the mitochondrion.

Belongs to the FMP52 family.

The protein resides in the mitochondrion outer membrane. The protein is Protein fmp52-1, mitochondrial (fmp521) of Aspergillus terreus (strain NIH 2624 / FGSC A1156).